The sequence spans 164 residues: 2S seed storage protein 3 (164 aa).

The N-terminal stretch at 1-21 (MANKLFLVCATLALCFLLTNA) is a signal peptide. 2 propeptides span residues 22–37 (SIYR…DASN) and 73–81 (GPSLDDEFD).

It belongs to the 2S seed storage albumins family. The mature protein consists of a small and a large chain linked by disulfide bonds. Interacts with AHK2.

In terms of biological role, this is a 2S seed storage protein. The protein is 2S seed storage protein 3 (AT2S3) of Arabidopsis thaliana (Mouse-ear cress).